The chain runs to 160 residues: Ribosomal RNA large subunit methyltransferase H (160 aa).

S-adenosyl-L-methionine contacts are provided by Leu76 and Gly108.

It belongs to the RNA methyltransferase RlmH family. Homodimer.

It localises to the cytoplasm. It carries out the reaction pseudouridine(1915) in 23S rRNA + S-adenosyl-L-methionine = N(3)-methylpseudouridine(1915) in 23S rRNA + S-adenosyl-L-homocysteine + H(+). In terms of biological role, specifically methylates the pseudouridine at position 1915 (m3Psi1915) in 23S rRNA. The chain is Ribosomal RNA large subunit methyltransferase H from Rhodopseudomonas palustris (strain BisB18).